Consider the following 457-residue polypeptide: B-cell linker protein (457 aa).

The segment at 38–306 (KLKVKGPPSV…FPPTQKPVLQ (269 aa)) is disordered. Over residues 57 to 74 (PADEEEQWSDDFDSDYEN) the composition is skewed to acidic residues. 5 positions are modified to phosphotyrosine; by SYK: Tyr72, Tyr84, Tyr96, Tyr178, and Tyr189. Acidic residues predominate over residues 172–187 (LEDEADYVVPVEDNDE). Composition is skewed to polar residues over residues 206 to 218 (VNRSTKPNSSSKH) and 256 to 270 (PLKTTPVPSLQNASN). The span at 272–290 (CEEKPVPAERHRGSSHRQD) shows a compositional bias: basic and acidic residues. Positions 347–454 (WYAGACDRKS…KDSTRLKYAV (108 aa)) constitute an SH2 domain.

As to quaternary structure, associates with PLCG1, VAV1 and NCK1 in a B-cell antigen receptor-dependent fashion. Interacts with VAV3, PLCG2 and GRB2. Interacts through its SH2 domain with CD79A. Interacts (via SH2 domain) with SYK; phosphorylated and activated by SYK. Interacts (via SH2 domain) with SCIMP; this interaction is dependent on phosphorylation of SCIMP 'Tyr-120'. In terms of processing, following BCR activation, phosphorylated on tyrosine residues by SYK and LYN. When phosphorylated, serves as a scaffold to assemble downstream targets of antigen activation, including PLCG1, VAV1, GRB2 and NCK1. Phosphorylation of Tyr-84, Tyr-178 and Tyr-189 facilitates PLCG1 binding. Phosphorylation of Tyr-96 facilitates BTK binding. Phosphorylation of Tyr-72 facilitates VAV1 and NCK1 binding. Phosphorylation is required for both Ca(2+) and MAPK signaling pathways.

The protein localises to the cytoplasm. Its subcellular location is the cell membrane. In terms of biological role, functions as a central linker protein, downstream of the B-cell receptor (BCR), bridging the SYK kinase to a multitude of signaling pathways and regulating biological outcomes of B-cell function and development. Plays a role in the activation of ERK/EPHB2, MAP kinase p38 and JNK. Modulates AP1 activation. Important for the activation of NF-kappa-B and NFAT. Plays an important role in BCR-mediated PLCG1 and PLCG2 activation and Ca(2+) mobilization and is required for trafficking of the BCR to late endosomes. However, does not seem to be required for pre-BCR-mediated activation of MAP kinase and phosphatidyl-inositol 3 (PI3) kinase signaling. May be required for the RAC1-JNK pathway. Plays a critical role in orchestrating the pro-B cell to pre-B cell transition. May play an important role in BCR-induced B-cell apoptosis. In Rattus norvegicus (Rat), this protein is B-cell linker protein (Blnk).